Consider the following 513-residue polypeptide: ATP synthase subunit alpha (513 aa).

Residue 169–176 (GDRQTGKT) coordinates ATP.

It belongs to the ATPase alpha/beta chains family. F-type ATPases have 2 components, CF(1) - the catalytic core - and CF(0) - the membrane proton channel. CF(1) has five subunits: alpha(3), beta(3), gamma(1), delta(1), epsilon(1). CF(0) has three main subunits: a(1), b(2) and c(9-12). The alpha and beta chains form an alternating ring which encloses part of the gamma chain. CF(1) is attached to CF(0) by a central stalk formed by the gamma and epsilon chains, while a peripheral stalk is formed by the delta and b chains.

The protein resides in the cell inner membrane. It catalyses the reaction ATP + H2O + 4 H(+)(in) = ADP + phosphate + 5 H(+)(out). Its function is as follows. Produces ATP from ADP in the presence of a proton gradient across the membrane. The alpha chain is a regulatory subunit. The protein is ATP synthase subunit alpha of Salmonella paratyphi C (strain RKS4594).